We begin with the raw amino-acid sequence, 165 residues long: Anaerobic nitrite reductase GLB1 (165 aa).

A Globin domain is found at 12–162; the sequence is VFGEEQEALV…LVAAIKREMK (151 aa). The short motif at 45-49 is the Homodimerization element; that stretch reads EIAPS. Heme b contacts are provided by serine 55, lysine 69, histidine 73, arginine 103, threonine 107, and histidine 108. The Homodimerization motif lies at 115 to 127; it reads DGHFEVTGFALLE.

This sequence belongs to the plant globin family. In terms of assembly, homodimer. Requires heme b as cofactor. In vegetative but not in embryonic organs.

The protein resides in the cytoplasm. It is found in the nucleus. The enzyme catalyses Fe(III)-heme b-[protein] + nitric oxide + H2O = Fe(II)-heme b-[protein] + nitrite + 2 H(+). In terms of biological role, phytoglobin that reduces nitrite to nitric oxide (NO) under anoxic conditions (e.g. during flooding or in waterlogged soil). May not function as an oxygen storage or transport protein. Has an unusually high affinity for O(2) through an hexacoordinate heme iron because of a very low dissociation constant. This is Anaerobic nitrite reductase GLB1 (HB) from Zea mays subsp. parviglumis (Balsas teosinte).